The chain runs to 304 residues: Putative ankyrin repeat protein R602 (304 aa).

ANK repeat units lie at residues 82-117 (LIRY…DITF), 118-146 (NDNF…DVHA), 147-176 (DNEF…DPFC), 178-206 (DNIV…DINA), 207-236 (GNNY…SIND), and 238-266 (SPND…DIST).

This is Putative ankyrin repeat protein R602 from Acanthamoeba polyphaga (Amoeba).